The chain runs to 487 residues: Serine/threonine-protein kinase 4 (487 aa).

Met-1 bears the N-acetylmethionine mark. Thr-3 bears the Phosphothreonine mark. In terms of domain architecture, Protein kinase spans 30 to 281 (FDVLEKLGEG…ATQLLQHPFV (252 aa)). Residues 36 to 44 (LGEGSYGSV) and Lys-59 each bind ATP. The active-site Proton acceptor is Asp-149. Residue Thr-183 is modified to Phosphothreonine; by autocatalysis. Phosphoserine is present on residues Ser-265 and Ser-320. A coiled-coil region spans residues 289–327 (ILRDLINEAMDVKLKRQEAQQREVDQEEEENSEEDELDS). The segment at 305 to 332 (QEAQQREVDQEEEENSEEDELDSGTMVR) is disordered. Residues 313-326 (DQEEEENSEEDELD) show a composition bias toward acidic residues. A phosphothreonine mark is found at Thr-340 and Thr-367. Thr-387 carries the phosphothreonine; by PKB/AKT1 modification. Phosphoserine is present on residues Ser-410 and Ser-414. Position 433 is a phosphotyrosine (Tyr-433). One can recognise an SARAH domain in the interval 433-480 (YEFLKSWTVEDLQKRLLALDPMMEQEIEEIRQKYQSKRQPILDAIEAK).

Belongs to the protein kinase superfamily. STE Ser/Thr protein kinase family. STE20 subfamily. In terms of assembly, homodimer; mediated via the coiled-coil region. Interacts with NORE1, which inhibits autoactivation. Interacts with and stabilizes SAV1. Interacts with RASSF1. Interacts with FOXO3. Interacts with RASSF2 (via SARAH domain). Interacts with AR, PKB/AKT1, TNNI3 and SIRT1. Interacts with DLG5 (via PDZ domain 3). Interacts with MARK3 and SCRIB in the presence of DLG5. Mg(2+) serves as cofactor. Post-translationally, autophosphorylated on serine and threonine residues. Phosphorylation at Thr-387 by PKB/AKT1, leads to inhibition of its: kinase activity, nuclear translocation and autophosphorylation at Thr-183. It also diminishes its cleavage by caspases and its ability to phosphorylate FOXO3. In terms of processing, proteolytically cleaved by caspase-3 during apoptosis at Asp-326 and Asp-349 resulting in a 37 kDa or a 39 kDa subunit respectively. The 39 kDa subunit is further cleaved into the 37 kDa form. Proteolytic cleavage results in kinase activation and nuclear translocation of the truncated form (MST1/N). It is less likely that cleavage at Asp-349 is a prerequisite for activation as this site is not conserved in the murine ortholog.

The protein resides in the cytoplasm. The protein localises to the nucleus. It catalyses the reaction L-seryl-[protein] + ATP = O-phospho-L-seryl-[protein] + ADP + H(+). The catalysed reaction is L-threonyl-[protein] + ATP = O-phospho-L-threonyl-[protein] + ADP + H(+). Inhibited by the C-terminal non-catalytic region. Activated by caspase-cleavage. Full activation also requires homodimerization and autophosphorylation of Thr-183. Activated by RASSF1 which acts by preventing its dephosphorylation. Stress-activated, pro-apoptotic kinase which, following caspase-cleavage, enters the nucleus and induces chromatin condensation followed by internucleosomal DNA fragmentation. Key component of the Hippo signaling pathway which plays a pivotal role in organ size control and tumor suppression by restricting proliferation and promoting apoptosis. The core of this pathway is composed of a kinase cascade wherein STK3/MST2 and STK4/MST1, in complex with its regulatory protein SAV1, phosphorylates and activates LATS1/2 in complex with its regulatory protein MOB1, which in turn phosphorylates and inactivates YAP1 oncoprotein and WWTR1/TAZ. Phosphorylation of YAP1 by LATS2 inhibits its translocation into the nucleus to regulate cellular genes important for cell proliferation, cell death, and cell migration. STK3/MST2 and STK4/MST1 are required to repress proliferation of mature hepatocytes, to prevent activation of facultative adult liver stem cells (oval cells), and to inhibit tumor formation. Phosphorylates 'Ser-14' of histone H2B (H2BS14ph) during apoptosis. Phosphorylates FOXO3 upon oxidative stress, which results in its nuclear translocation and cell death initiation. Phosphorylates MOBKL1A, MOBKL1B and RASSF2. Phosphorylates TNNI3 (cardiac Tn-I) and alters its binding affinity to TNNC1 (cardiac Tn-C) and TNNT2 (cardiac Tn-T). Phosphorylates FOXO1 on 'Ser-212' and regulates its activation and stimulates transcription of PMAIP1 in a FOXO1-dependent manner. Phosphorylates SIRT1 and inhibits SIRT1-mediated p53/TP53 deacetylation, thereby promoting p53/TP53 dependent transcription and apoptosis upon DNA damage. Acts as an inhibitor of PKB/AKT1. Phosphorylates AR on 'Ser-650' and suppresses its activity by intersecting with PKB/AKT1 signaling and antagonizing formation of AR-chromatin complexes. In Bos taurus (Bovine), this protein is Serine/threonine-protein kinase 4 (STK4).